We begin with the raw amino-acid sequence, 148 residues long: U2 snRNP component IST3 (148 aa).

Positions 31–109 (AYIYIGNLNR…RALKIDHTFY (79 aa)) constitute an RRM domain.

This sequence belongs to the IST3 family. Component of the 45S U1.U2.U4/U6.U5 penta-snRNP particle, a subcomplex of the spliceosome. Belongs to the CWC complex (or CEF1-associated complex), a spliceosome sub-complex reminiscent of a late-stage spliceosome composed of the U2, U5 and U6 snRNAs and at least BUD13, BUD31, BRR2, CDC40, CEF1, CLF1, CUS1, CWC2, CWC15, CWC21, CWC22, CWC23, CWC24, CWC25, CWC27, ECM2, HSH155, IST3, ISY1, LEA1, MSL1, NTC20, PRP8, PRP9, PRP11, PRP19, PRP21, PRP22, PRP45, PRP46, SLU7, SMB1, SMD1, SMD2, SMD3, SMX2, SMX3, SNT309, SNU114, SPP2, SYF1, SYF2, RSE1 and YJU2. Belongs to the pre-mRNA retention and splicing (RES) complex composed of at least BUD13, IST3 and PML1. Subunit of the U2 snRNP. Interacts with RDS3.

Its subcellular location is the cytoplasm. The protein resides in the nucleus. Required for pre-mRNA splicing and spliceosome assembly. As part of the pre-mRNA retention and splicing (RES) complex, required for nuclear pre-mRNA retention and efficient splicing. Required for MER1-activated splicing. The sequence is that of U2 snRNP component IST3 (IST3) from Saccharomyces cerevisiae (strain ATCC 204508 / S288c) (Baker's yeast).